The following is a 377-amino-acid chain: MNTIMAATGFLTGYIVPFILVLSLLVFVHEMGHYLVGRWCGIRSTAFSIGFGPELIGFTDKRGTRWKLSAIPLGGYVKFFGDEDAASKSDSSGLSHMSLEERAQTLSGAKLWKRAATVAAGPIANFILAILIFAVLFGIYGRMIADPVVAEVRENSAAATAGVKPGDRLVAIDGEKVMTFEDVRRYVGIRPGTPITVTVERAGEELKLPMVPTRTETTDQFGNKLEMGIIGIVTDQTSGNFRHIEYSPSEAVAEGVRETGHVITGTFNYIGNLVTGRMNADQLGGPVRVAQASGQMATLGISAVIQLAAVLSVSIGLLNLMPVPVLDGGHLVFYAIEAIRGRPLGAGAQEVAFRIGMMMILGLMVFATWNDISSLIG.

His29 is a Zn(2+) binding site. Glu30 is a catalytic residue. Residue His33 coordinates Zn(2+). Transmembrane regions (helical) follow at residues 118 to 140, 299 to 321, and 351 to 373; these read VAAG…FGIY, LGIS…LNLM, and VAFR…NDIS. The PDZ domain occupies 129-202; the sequence is AILIFAVLFG…TPITVTVERA (74 aa).

The protein belongs to the peptidase M50B family. It depends on Zn(2+) as a cofactor.

The protein resides in the cell inner membrane. The polypeptide is Putative zinc metalloprotease Atu1380 (Agrobacterium fabrum (strain C58 / ATCC 33970) (Agrobacterium tumefaciens (strain C58))).